The following is a 728-amino-acid chain: Fibulin-1 (728 aa).

An N-terminal signal peptide occupies residues Met1–Ala17. Intrachain disulfides connect Cys23–Cys49, Cys24–Cys56, Cys37–Cys57, Cys66–Cys94, Cys79–Cys95, Cys97–Cys121, Cys98–Cys128, Cys111–Cys129, Cys159–Cys168, Cys164–Cys178, Cys180–Cys279, Cys285–Cys298, Cys292–Cys307, Cys347–Cys359, Cys353–Cys368, Cys375–Cys388, Cys394–Cys404, Cys399–Cys413, Cys415–Cys428, Cys434–Cys448, Cys442–Cys457, Cys459–Cys472, Cys478–Cys489, Cys485–Cys498, Cys500–Cys513, Cys519–Cys534, Cys530–Cys543, Cys545–Cys558, Cys564–Cys576, and Cys569–Cys585. Anaphylatoxin-like domains follow at residues Cys23–Asn64, Ala65–Asp96, and Cys97–Cys129. In terms of domain architecture, EGF-like 1 spans Leu155–Val194. Residues Asp195–Val280 enclose the EGF-like 2; calcium-binding domain. An EGF-like 3; calcium-binding domain is found at Asp281 to Ile344. One can recognise an EGF-like 4; calcium-binding domain in the interval Asp343–Glu389. Positions Asp390–Glu429 constitute an EGF-like 5; calcium-binding domain. One can recognise an EGF-like 6; calcium-binding domain in the interval Asp430–Glu473. Positions Asp474–Glu514 constitute an EGF-like 7; calcium-binding domain. The 45-residue stretch at Asp515–Val559 folds into the EGF-like 8; calcium-binding domain. Residues Asp560–Cys610 enclose the EGF-like 9; calcium-binding domain. Residue Asn624 is glycosylated (N-linked (GlcNAc...) asparagine).

The protein belongs to the fibulin family. In terms of assembly, homomultimerizes and interacts with various extracellular matrix components. In terms of tissue distribution, expressed in head muscle cells, anterior and posterior intestinal cells. Isoform a: Expressed in male and hermaphrodite gonad, anterior and posterior intestine and pharyngeal basement membranes, body-wall muscle, GLR cells, uterine attachment and mechanosensory neurons. Isoform c: Expressed on ALM/PLM mechanosensory neuron attachments, in flexible tracks connecting the pharyngeal, body-wall-muscle basement membranes and in uterine attachments.

It localises to the secreted. The protein localises to the extracellular space. It is found in the extracellular matrix. The protein resides in the basement membrane. Functionally, incorporated into fibronectin-containing matrix fibers. Plays a role in cell adhesion and migration along protein fibers within the extracellular matrix (ECM). Important for certain developmental processes and contributes to the supramolecular organization of ECM architecture, in particular to those of basement membranes. Involved in regulating the shape and adhesion of cells in the developing pharynx, intestine, body-wall muscle and gonadal tissue. During gonadogenesis, regulates the width of gonads and the migration of distal tip cells (DTC). Together with type IV collagen let-2 and downstream of metalloprotease mig-17, recruits nidogen nid-1 to the gonad basement membrane thereby inducing basement membrane remodeling required for the directional migration of DTCs. Acts antagonistically with metalloprotease gon-1 to maintain optimal levels of type IV collagen emb-9 in the gonad basement membrane during gonadogenesis. Required for larval development. Its function is as follows. Involved in the assembly of the flexible hemicentin-containing tracks found joining the pharynx and body-wall-muscle basement membranes. The sequence is that of Fibulin-1 (fbl-1) from Caenorhabditis elegans.